Consider the following 101-residue polypeptide: Small ribosomal subunit protein uS10 (101 aa).

It belongs to the universal ribosomal protein uS10 family. Part of the 30S ribosomal subunit.

Functionally, involved in the binding of tRNA to the ribosomes. The sequence is that of Small ribosomal subunit protein uS10 from Mycobacterium leprae (strain Br4923).